Here is a 253-residue protein sequence, read N- to C-terminus: 5'/3'-nucleotidase SurE (253 aa).

Asp-8, Asp-9, Ser-39, and Asn-92 together coordinate a divalent metal cation.

It belongs to the SurE nucleotidase family. A divalent metal cation is required as a cofactor.

It is found in the cytoplasm. It catalyses the reaction a ribonucleoside 5'-phosphate + H2O = a ribonucleoside + phosphate. The catalysed reaction is a ribonucleoside 3'-phosphate + H2O = a ribonucleoside + phosphate. It carries out the reaction [phosphate](n) + H2O = [phosphate](n-1) + phosphate + H(+). Functionally, nucleotidase with a broad substrate specificity as it can dephosphorylate various ribo- and deoxyribonucleoside 5'-monophosphates and ribonucleoside 3'-monophosphates with highest affinity to 3'-AMP. Also hydrolyzes polyphosphate (exopolyphosphatase activity) with the preference for short-chain-length substrates (P20-25). Might be involved in the regulation of dNTP and NTP pools, and in the turnover of 3'-mononucleotides produced by numerous intracellular RNases (T1, T2, and F) during the degradation of various RNAs. The chain is 5'/3'-nucleotidase SurE from Escherichia coli O17:K52:H18 (strain UMN026 / ExPEC).